Reading from the N-terminus, the 533-residue chain is Probable polyamine oxidase 5 (533 aa).

FAD is bound by residues glutamate 37, arginine 45, valine 262, and glutamate 501.

It belongs to the flavin monoamine oxidase family. FAD serves as cofactor. In terms of tissue distribution, expressed in root vasculature, leaves and stems.

It is found in the cytoplasm. The catalysed reaction is spermine + O2 + H2O = 3-aminopropanal + spermidine + H2O2. It catalyses the reaction N(1)-acetylspermine + O2 + H2O = 3-acetamidopropanal + spermidine + H2O2. It carries out the reaction norspermine + O2 + H2O = norspermidine + 3-aminopropanal + H2O2. The enzyme catalyses thermospermine + O2 + H2O = 3-aminopropanal + spermidine + H2O2. It functions in the pathway amine and polyamine degradation; spermine degradation. Functionally, flavoenzyme involved in polyamine back-conversion. Catalyzes the oxidation of the secondary amino group of polyamines, such as spermine and its acetyl derivatives. Substrate preference is spermine &gt; N(1)-acetylspermine &gt; thermospermine &gt; norspermine. Plays an important role in the regulation of polyamine intracellular concentration. Involved in xylem differentiation by controlling thermospermine homeostasis, and participating in the tightly controlled interplay between auxin and cytokinin that is necessary for proper xylem differentiation. Involved in the production of hydrogen peroxide in response to salt and cold stresses. The chain is Probable polyamine oxidase 5 from Arabidopsis thaliana (Mouse-ear cress).